A 306-amino-acid chain; its full sequence is MKHFLTLRDFSKEEILSLVNHASELKKEPKKLLQDKTLAMIFEKNSTRTRMAFELAITELGGKALFLSSNDLQLSRGEPVKDTARVIGAMVDFIMMRVNKHENLLEFARYSKAPVINALSELYHPTQVLGDLLTIKEWNKIQNGIAKVAFIGDSNNMCNSWLIAAAILGFEFSIAIPKNYEINPEIWDFAMKQALISGAKISLSHDKFKALKDKDVVITDTWVSMGEENEKERKIKEFEEFMIDEKAMSVANEDAILLHCLPAYRGYEVSEEIFEKHADVIFEEARNRLYVVKALLCFLDNQRGRK.

Residues 46 to 49 (STRT), Gln73, Arg97, and 124 to 127 (HPTQ) contribute to the carbamoyl phosphate site. L-ornithine is bound by residues Asn156, Asp220, and 224 to 225 (SM). Carbamoyl phosphate is bound by residues 260 to 261 (CL) and Arg288.

It belongs to the aspartate/ornithine carbamoyltransferase superfamily. OTCase family.

The protein localises to the cytoplasm. It carries out the reaction carbamoyl phosphate + L-ornithine = L-citrulline + phosphate + H(+). Its pathway is amino-acid degradation; L-arginine degradation via ADI pathway; carbamoyl phosphate from L-arginine: step 2/2. Functionally, reversibly catalyzes the transfer of the carbamoyl group from carbamoyl phosphate (CP) to the N(epsilon) atom of ornithine (ORN) to produce L-citrulline. This Campylobacter jejuni subsp. doylei (strain ATCC BAA-1458 / RM4099 / 269.97) protein is Ornithine carbamoyltransferase.